The following is a 635-amino-acid chain: Phosphomethylpyrimidine synthase (635 aa).

Residues 1 to 14 (MNATVSSAVQSSLP) show a composition bias toward polar residues. The tract at residues 1–41 (MNATVSSAVQSSLPFSGKTAQVDEGTVKPLPRSQKTYLSGS) is disordered. Substrate contacts are provided by residues N240, M269, Y298, H334, 354–356 (SRG), 395–398 (DGLR), and E434. H438 is a binding site for Zn(2+). Y461 contacts substrate. H502 contributes to the Zn(2+) binding site. Positions 582, 585, and 590 each coordinate [4Fe-4S] cluster.

This sequence belongs to the ThiC family. As to quaternary structure, homodimer. The cofactor is [4Fe-4S] cluster.

It carries out the reaction 5-amino-1-(5-phospho-beta-D-ribosyl)imidazole + S-adenosyl-L-methionine = 4-amino-2-methyl-5-(phosphooxymethyl)pyrimidine + CO + 5'-deoxyadenosine + formate + L-methionine + 3 H(+). The protein operates within cofactor biosynthesis; thiamine diphosphate biosynthesis. Functionally, catalyzes the synthesis of the hydroxymethylpyrimidine phosphate (HMP-P) moiety of thiamine from aminoimidazole ribotide (AIR) in a radical S-adenosyl-L-methionine (SAM)-dependent reaction. The protein is Phosphomethylpyrimidine synthase of Nitrosospira multiformis (strain ATCC 25196 / NCIMB 11849 / C 71).